Reading from the N-terminus, the 400-residue chain is Enoyl-[acyl-carrier-protein] reductase [NADH] (400 aa).

NAD(+)-binding positions include 48-53 (GASTGY), 74-75 (FE), 111-112 (DA), and 139-140 (LA). Position 225 (Tyr-225) interacts with substrate. Residue Tyr-235 is the Proton donor of the active site. NAD(+)-binding positions include Lys-244 and 273 to 275 (VVT).

The protein belongs to the TER reductase family. Monomer.

The catalysed reaction is a 2,3-saturated acyl-[ACP] + NAD(+) = a (2E)-enoyl-[ACP] + NADH + H(+). It functions in the pathway lipid metabolism; fatty acid biosynthesis. Involved in the final reduction of the elongation cycle of fatty acid synthesis (FAS II). Catalyzes the reduction of a carbon-carbon double bond in an enoyl moiety that is covalently linked to an acyl carrier protein (ACP). The polypeptide is Enoyl-[acyl-carrier-protein] reductase [NADH] (Burkholderia cenocepacia (strain HI2424)).